The primary structure comprises 275 residues: NifU-like protein 5, mitochondrial (275 aa).

The transit peptide at 1–61 (MKGLTRLLNS…TNASRNCSRS (61 aa)) directs the protein to the mitochondrion.

The protein belongs to the NifU family.

Its subcellular location is the mitochondrion. Molecular scaffold for [Fe-S] cluster assembly of mitochondrial iron-sulfur proteins. The polypeptide is NifU-like protein 5, mitochondrial (NIFU5) (Arabidopsis thaliana (Mouse-ear cress)).